Here is a 727-residue protein sequence, read N- to C-terminus: NADH-ubiquinone oxidoreductase 75 kDa subunit, mitochondrial (727 aa).

Residues 1-23 (MLRIPIKRALIGLSNSPKGYVRT) constitute a mitochondrion transit peptide. A 2Fe-2S ferredoxin-type domain is found at 30–108 (NLIEVFVDGQ…GWNILTNSEK (79 aa)). Positions 64, 75, and 78 each coordinate [2Fe-2S] cluster. Lysine 84 carries the N6-acetyllysine modification. Cysteine 92 contributes to the [2Fe-2S] cluster binding site. Residues 108–147 (KSKKAREGVMEFLLANHPLDCPICDQGGECDLQDQSMMFG) form the 4Fe-4S His(Cys)3-ligated-type domain. [4Fe-4S] cluster contacts are provided by histidine 124, cysteine 128, cysteine 131, cysteine 137, cysteine 176, cysteine 179, cysteine 182, and cysteine 226. Positions 245–301 (TRKTESIDVMDAVGSNIVVSTRTGEVMRILPRMHEDINEEWISDKTRFAYDGLKRQR) constitute a 4Fe-4S Mo/W bis-MGD-type domain. Serine 461 bears the Phosphoserine mark. An N6-acetyllysine mark is found at lysine 467, lysine 499, and lysine 709.

The protein belongs to the complex I 75 kDa subunit family. In terms of assembly, core subunit of respiratory chain NADH dehydrogenase (Complex I) which is composed of 45 different subunits. This is the largest subunit of complex I and it is a component of the iron-sulfur (IP) fragment of the enzyme. Complex I associates with ubiquinol-cytochrome reductase complex (Complex III) to form supercomplexes. In astrocytes, less complex I is assembled into supercomplexes as compared to neurons. Interacts with MDM2. Interacts with AKAP1. Requires [2Fe-2S] cluster as cofactor. It depends on [4Fe-4S] cluster as a cofactor. In terms of processing, acetylation of Lys-84 is observed in liver mitochondria from fasted mice but not from fed mice. As to expression, brain. More abundant in neurons than in astrocytes (at protein level).

It is found in the mitochondrion inner membrane. The enzyme catalyses a ubiquinone + NADH + 5 H(+)(in) = a ubiquinol + NAD(+) + 4 H(+)(out). Its function is as follows. Core subunit of the mitochondrial membrane respiratory chain NADH dehydrogenase (Complex I) which catalyzes electron transfer from NADH through the respiratory chain, using ubiquinone as an electron acceptor. Essential for catalysing the entry and efficient transfer of electrons within complex I. Plays a key role in the assembly and stability of complex I and participates in the association of complex I with ubiquinol-cytochrome reductase complex (Complex III) to form supercomplexes. The chain is NADH-ubiquinone oxidoreductase 75 kDa subunit, mitochondrial (Ndufs1) from Mus musculus (Mouse).